Reading from the N-terminus, the 328-residue chain is Tetraacyldisaccharide 4'-kinase (328 aa).

55 to 62 (TAGGNGKT) is a binding site for ATP.

The protein belongs to the LpxK family.

The catalysed reaction is a lipid A disaccharide + ATP = a lipid IVA + ADP + H(+). It participates in glycolipid biosynthesis; lipid IV(A) biosynthesis; lipid IV(A) from (3R)-3-hydroxytetradecanoyl-[acyl-carrier-protein] and UDP-N-acetyl-alpha-D-glucosamine: step 6/6. In terms of biological role, transfers the gamma-phosphate of ATP to the 4'-position of a tetraacyldisaccharide 1-phosphate intermediate (termed DS-1-P) to form tetraacyldisaccharide 1,4'-bis-phosphate (lipid IVA). The chain is Tetraacyldisaccharide 4'-kinase from Escherichia coli (strain SMS-3-5 / SECEC).